We begin with the raw amino-acid sequence, 181 residues long: BURP domain-containing protein 7 (181 aa).

Positions 1–21 (MARSLAALLLLLVAAAGDSHA) are cleaved as a signal peptide. The BURP domain maps to 65 to 181 (FFLEKDLFPG…RRGRRTGWRP (117 aa)). Residues 112–181 (QLSVPAGSPA…RRGRRTGWRP (70 aa)) are disordered. Positions 128 to 143 (RPRRSPARRSNARRRS) are enriched in basic residues. Residues 144–157 (SPWWSSPRPASAPA) are compositionally biased toward low complexity. A compositionally biased stretch (basic residues) spans 170 to 181 (GRRRGRRTGWRP).

In terms of tissue distribution, expressed in roots, stems, leaves and shoot.

This is BURP domain-containing protein 7 (BURP7) from Oryza sativa subsp. japonica (Rice).